The sequence spans 331 residues: Protein mono-ADP-ribosyltransferase PARP11 (331 aa).

Residue Lys-11 is modified to N6-(ADP-ribosyl)lysine. The WWE domain occupies 15-99 (SDVDDMDTSD…VTGKQRLIKR (85 aa)). Cys-49 and Cys-65 each carry ADP-ribosylcysteine. The residue at position 80 (Asp-80) is an ADP-ribosyl aspartic acid. A PARP catalytic domain is found at 116–331 (IPMPTHWENV…IYPEYLIDFH (216 aa)).

It belongs to the ARTD/PARP family. Post-translationally, auto-mono-ADP-ribosylated. Predominantly expressed in testis, preferentially in postmeiotic germ cells. Also detectable in other tissues, including liver, lung, spleen, thymus and brain.

It localises to the nucleus. The protein resides in the nuclear pore complex. It catalyses the reaction L-aspartyl-[protein] + NAD(+) = 4-O-(ADP-D-ribosyl)-L-aspartyl-[protein] + nicotinamide. The enzyme catalyses L-cysteinyl-[protein] + NAD(+) = S-(ADP-D-ribosyl)-L-cysteinyl-[protein] + nicotinamide + H(+). The catalysed reaction is L-glutamyl-[protein] + NAD(+) = 5-O-(ADP-D-ribosyl)-L-glutamyl-[protein] + nicotinamide. It carries out the reaction L-lysyl-[protein] + NAD(+) = N(6)-(ADP-D-ribosyl)-L-lysyl-[protein] + nicotinamide + H(+). Mono-ADP-ribosyltransferase that mediates mono-ADP-ribosylation of target proteins. Plays a role in nuclear envelope stability and nuclear remodeling during spermiogenesis. Inhibits the type I interferon activated signaling pathway. Mechanistically, mono-ADP-ribosylates beta-TrCP/BTRC to promote IFNAR1 ubiquitination and protect BTRC from ubiquitin-proteasome degradation. In Mus musculus (Mouse), this protein is Protein mono-ADP-ribosyltransferase PARP11.